A 456-amino-acid chain; its full sequence is GTPase Der (456 aa).

EngA-type G domains are found at residues Phe3 to Glu167 and Ile185 to Asn360. GTP-binding positions include Gly9–Ser16, Asp56–Leu60, Asn119–Glu122, Gly191–Ser198, Asp238–Leu242, and Asn303–Asp306. Residues Arg361–Ala445 form the KH-like domain.

This sequence belongs to the TRAFAC class TrmE-Era-EngA-EngB-Septin-like GTPase superfamily. EngA (Der) GTPase family. In terms of assembly, associates with the 50S ribosomal subunit.

GTPase that plays an essential role in the late steps of ribosome biogenesis. The sequence is that of GTPase Der from Bradyrhizobium sp. (strain BTAi1 / ATCC BAA-1182).